Reading from the N-terminus, the 67-residue chain is Prokaryotic ubiquitin-like protein Pup (67 aa).

Low complexity predominate over residues 1–13; sequence MAGQEQQQPQSRD. The interval 1–48 is disordered; it reads MAGQEQQQPQSRDSQVDEDIPEAPPAPPEAQASASTEGVDDLLDEIDG. An ARC ATPase binding region spans residues 25-61; sequence PAPPEAQASASTEGVDDLLDEIDGVLESNAEEFVRAF. Over residues 38 to 48 the composition is skewed to acidic residues; that stretch reads GVDDLLDEIDG. Q67 is subject to Deamidated glutamine. An Isoglutamyl lysine isopeptide (Gln-Lys) (interchain with K-? in acceptor proteins) cross-link involves residue Q67.

The protein belongs to the prokaryotic ubiquitin-like protein family. In terms of assembly, strongly interacts with the proteasome-associated ATPase ARC through a hydrophobic interface; the interacting region of Pup lies in its C-terminal half. There is one Pup binding site per ARC hexamer ring. Is modified by deamidation of its C-terminal glutamine to glutamate by the deamidase Dop, a prerequisite to the subsequent pupylation process.

The protein operates within protein degradation; proteasomal Pup-dependent pathway. In terms of biological role, protein modifier that is covalently attached to lysine residues of substrate proteins, thereby targeting them for proteasomal degradation. The tagging system is termed pupylation. The polypeptide is Prokaryotic ubiquitin-like protein Pup (Pseudarthrobacter chlorophenolicus (strain ATCC 700700 / DSM 12829 / CIP 107037 / JCM 12360 / KCTC 9906 / NCIMB 13794 / A6) (Arthrobacter chlorophenolicus)).